The chain runs to 71 residues: Translation initiation factor IF-1 (71 aa).

In terms of domain architecture, S1-like spans 1 to 71 (MSKDDLIQFT…LTKGRVIHRH (71 aa)).

It belongs to the IF-1 family. Component of the 30S ribosomal translation pre-initiation complex which assembles on the 30S ribosome in the order IF-2 and IF-3, IF-1 and N-formylmethionyl-tRNA(fMet); mRNA recruitment can occur at any time during PIC assembly.

The protein resides in the cytoplasm. Its function is as follows. One of the essential components for the initiation of protein synthesis. Stabilizes the binding of IF-2 and IF-3 on the 30S subunit to which N-formylmethionyl-tRNA(fMet) subsequently binds. Helps modulate mRNA selection, yielding the 30S pre-initiation complex (PIC). Upon addition of the 50S ribosomal subunit IF-1, IF-2 and IF-3 are released leaving the mature 70S translation initiation complex. This is Translation initiation factor IF-1 from Rickettsia typhi (strain ATCC VR-144 / Wilmington).